Consider the following 256-residue polypeptide: 5'-nucleotidase SurE (256 aa).

Residues aspartate 9, aspartate 10, serine 42, and asparagine 99 each coordinate a divalent metal cation.

It belongs to the SurE nucleotidase family. The cofactor is a divalent metal cation.

It is found in the cytoplasm. It carries out the reaction a ribonucleoside 5'-phosphate + H2O = a ribonucleoside + phosphate. In terms of biological role, nucleotidase that shows phosphatase activity on nucleoside 5'-monophosphates. In Symbiobacterium thermophilum (strain DSM 24528 / JCM 14929 / IAM 14863 / T), this protein is 5'-nucleotidase SurE.